Consider the following 180-residue polypeptide: Large ribosomal subunit protein uL5 (180 aa).

The protein belongs to the universal ribosomal protein uL5 family. As to quaternary structure, part of the 50S ribosomal subunit; part of the 5S rRNA/L5/L18/L25 subcomplex. Contacts the 5S rRNA and the P site tRNA. Forms a bridge to the 30S subunit in the 70S ribosome.

Its function is as follows. This is one of the proteins that bind and probably mediate the attachment of the 5S RNA into the large ribosomal subunit, where it forms part of the central protuberance. In the 70S ribosome it contacts protein S13 of the 30S subunit (bridge B1b), connecting the 2 subunits; this bridge is implicated in subunit movement. Contacts the P site tRNA; the 5S rRNA and some of its associated proteins might help stabilize positioning of ribosome-bound tRNAs. In Streptococcus sanguinis (strain SK36), this protein is Large ribosomal subunit protein uL5.